The following is a 135-amino-acid chain: Crustacean hyperglycemic hormones (135 aa).

The first 26 residues, 1 to 26, serve as a signal peptide directing secretion; sequence MIRSSVMGPTMFLVVLLLIASHQTSA. 3 disulfide bridges follow: C68–C104, C84–C100, and C87–C113. V133 is modified (valine amide).

It belongs to the arthropod CHH/MIH/GIH/VIH hormone family. As to expression, produced by the medulla terminalis X-organ in the eyestalks and transported to the sinus gland where they are stored and released.

The protein localises to the secreted. Its function is as follows. Hormone found in the sinus gland of isopods and decapods which controls the blood sugar level. Has a secretagogue action over the amylase released from the midgut gland. May act as a stress hormone and may be involved in the control of molting and reproduction. This is Crustacean hyperglycemic hormones (CHH) from Macrobrachium lanchesteri (Freshwater prawn).